The primary structure comprises 1280 residues: Fibronectin type III domain-containing protein (1280 aa).

The first 19 residues, methionine 1–alanine 19, serve as a signal peptide directing secretion. The Extracellular segment spans residues glutamine 20–alanine 1156. 5 cysteine pairs are disulfide-bonded: cysteine 58-cysteine 111, cysteine 268-cysteine 321, cysteine 369-cysteine 417, cysteine 460-cysteine 511, and cysteine 553-cysteine 604. Fibronectin type-III domains follow at residues proline 628 to phenylalanine 722, proline 730 to phenylalanine 824, proline 830 to aspartate 933, proline 939 to threonine 1033, and proline 1039 to aspartate 1131. A compositionally biased stretch (polar residues) spans tyrosine 1118–serine 1130. The segment at tyrosine 1118 to valine 1144 is disordered. A helical membrane pass occupies residues tryptophan 1157–leucine 1177. The Cytoplasmic portion of the chain corresponds to tyrosine 1178 to valine 1280. Residues aspartate 1206–valine 1280 form a disordered region. Residues aspartate 1262 to proline 1273 show a composition bias toward basic and acidic residues.

Component of the acid-insoluble organic matrix of the aragonitic skeleton (at protein level).

Its subcellular location is the membrane. The sequence is that of Fibronectin type III domain-containing protein from Acropora millepora (Staghorn coral).